Consider the following 149-residue polypeptide: MADQLTDEQIAEFKEAFSLFDKDGDGCITTKELGTVMRSLGQNPTEAELQDMINEVDADGNGTIDFPEFLNLMARKMKDTDSEEELKEAFRVFDKDQDGFISAAELRHVMTNLGEKLTDEEVDEMIREADVDGDGQINYEEFVKVMMAK.

Ala-2 is subject to N-acetylalanine. EF-hand domains are found at residues 8–43, 44–79, 81–116, and 117–149; these read EQIAEFKEAFSLFDKDGDGCITTKELGTVMRSLGQN, PTEAELQDMINEVDADGNGTIDFPEFLNLMARKMKD, DSEEELKEAFRVFDKDQDGFISAAELRHVMTNLGEK, and LTDEEVDEMIREADVDGDGQINYEEFVKVMMAK. Residues Asp-21, Asp-23, Asp-25, Cys-27, Glu-32, Asp-57, Asp-59, Asn-61, Thr-63, Glu-68, Asp-94, Asp-96, Asp-98, and Glu-105 each contribute to the Ca(2+) site. Lys-116 carries the N6,N6,N6-trimethyllysine modification. Ca(2+)-binding residues include Asp-130, Asp-132, Asp-134, Gln-136, and Glu-141.

It belongs to the calmodulin family.

In terms of biological role, calmodulin mediates the control of a large number of enzymes, ion channels and other proteins by Ca(2+). Among the enzymes to be stimulated by the calmodulin-Ca(2+) complex are a number of protein kinases and phosphatases. This is Calmodulin from Triticum aestivum (Wheat).